A 414-amino-acid polypeptide reads, in one-letter code: Na(+)-translocating NADH-quinone reductase subunit B (414 aa).

3 helical membrane-spanning segments follow: residues 56 to 76, 129 to 149, and 164 to 184; these read IMIM…YNAG, FLPI…LFCM, and ILFA…LGIT. Threonine 236 is subject to FMN phosphoryl threonine. The next 5 membrane-spanning stretches (helical) occupy residues 268–288, 297–317, 325–345, 358–378, and 381–401; these read IPGS…AMIV, IIAG…VIGS, MPWH…FMAT, WWYG…NPAY, and GMML…HVVI.

It belongs to the NqrB/RnfD family. In terms of assembly, composed of six subunits; NqrA, NqrB, NqrC, NqrD, NqrE and NqrF. FMN is required as a cofactor.

It localises to the cell inner membrane. The enzyme catalyses a ubiquinone + n Na(+)(in) + NADH + H(+) = a ubiquinol + n Na(+)(out) + NAD(+). Its activity is regulated as follows. This reaction is tightly coupled to the Na(+) pumping activity and specifically requires Na(+) for activity. Inhibited by korormicin and 2-N-heptyl-4-hydroxyquinoline N-oxide (HQNO). NQR complex catalyzes the reduction of ubiquinone-1 to ubiquinol by two successive reactions, coupled with the transport of Na(+) ions from the cytoplasm to the periplasm. NqrA to NqrE are probably involved in the second step, the conversion of ubisemiquinone to ubiquinol. The protein is Na(+)-translocating NADH-quinone reductase subunit B of Vibrio alginolyticus.